The primary structure comprises 283 residues: Pantothenate synthetase (283 aa).

ATP is bound at residue 30 to 37 (MGNLHDGH). The Proton donor role is filled by histidine 37. A (R)-pantoate-binding site is contributed by glutamine 61. Glutamine 61 contributes to the beta-alanine binding site. 149 to 152 (GEKD) is an ATP binding site. (R)-pantoate is bound at residue glutamine 155. Position 186–189 (186–189 (LSSR)) interacts with ATP.

It belongs to the pantothenate synthetase family. As to quaternary structure, homodimer.

The protein resides in the cytoplasm. It catalyses the reaction (R)-pantoate + beta-alanine + ATP = (R)-pantothenate + AMP + diphosphate + H(+). Its pathway is cofactor biosynthesis; (R)-pantothenate biosynthesis; (R)-pantothenate from (R)-pantoate and beta-alanine: step 1/1. Its function is as follows. Catalyzes the condensation of pantoate with beta-alanine in an ATP-dependent reaction via a pantoyl-adenylate intermediate. The polypeptide is Pantothenate synthetase (Shigella sonnei (strain Ss046)).